Reading from the N-terminus, the 516-residue chain is Multicopper oxidase CueO (516 aa).

The segment at residues 1 to 28 (MQRRDFLKYSVALGVASALPLWSRAVFA) is a signal peptide (tat-type signal). Plastocyanin-like domains lie at 55–165 (GQST…IEDD) and 227–292 (PRGW…DNKP). Positions 101, 103, 141, and 143 each coordinate Cu cation. The tract at residues 355–400 (MDPMLDMMGMQMLMEKYGDQAMAGMDHSQMMGHMGHGNMNHMNHGG) is methionine-rich region. Residues 402 to 516 (FDFHHANKIN…DTGMMLGFTV (115 aa)) form the Plastocyanin-like 3 domain. Cu cation is bound by residues His443, His446, His448, His499, Cys500, His501, and His505.

The protein belongs to the multicopper oxidase family. Monomer. It depends on Cu cation as a cofactor. Exported by the Tat system. The position of the signal peptide cleavage has been experimentally proven.

The protein resides in the periplasm. The catalysed reaction is 4 Cu(+) + O2 + 4 H(+) = 4 Cu(2+) + 2 H2O. With respect to regulation, ferroxidase and phenoloxidase activities are enhanced considerably in the presence of excess copper ions. A labile regulatory copper ion near the T1 copper site is important for the copper associated activation of enzyme activity. Ag(+) acts as a potent inhibitor of oxidase activity by binding at Cu(+) binding sites, blocking Cu(+) substrate binding and oxidation. pPD oxidase activity is strongly inhibited by sodium azide, an inhibitor of the electron transfer. In terms of biological role, multicopper oxidase involved in copper homeostasis and copper tolerance under aerobic conditions. Is responsible for the oxidation of Cu(+) to the less harmful Cu(2+) in the periplasm, thereby preventing Cu(+) from entering the cytoplasm. Probably primarily functions as a cuprous oxidase in vivo. Functionally, in vitro, in the presence of excess copper ions, exhibits ferroxidase and phenoloxidase activities. Fe(2+) is an excellent substrate in the presence of excess Cu(2+), but is inactive in the absence of Cu(2+). Oxidizes the phenolate iron siderophores enterobactin, 2,3-dihydroxybenzoate (2,3-DHB) and 3-hydroxyanthranilate (3-HAA). Oxidation and thus inactivation of enterobactin could protect cells from the interaction of enterobactin with copper and play a central role as an interface between copper detoxification and iron homeostasis. Also oxidizes a variety of phenolic model substrates, including 2,2'-azinobis(3-ethylbenzthiazolinesulfonic acid) (ABTS), p-phenylenediamine (pPD), 2,6-dimethoxyphenol (2,6-DMP) and 3,4-dihydroxybenzoic acid (3,4-DHB). This is Multicopper oxidase CueO from Escherichia coli (strain K12).